Here is a 262-residue protein sequence, read N- to C-terminus: Regulatory protein RecX (262 aa).

The protein belongs to the RecX family.

It localises to the cytoplasm. In terms of biological role, modulates RecA activity. The sequence is that of Regulatory protein RecX from Photobacterium profundum (strain SS9).